The sequence spans 1012 residues: Structural polyprotein (1012 aa).

A divalent metal cation is bound at residue Asp-30. A Peptidase S50 domain is found at 513 to 755 (ADKGYEVVAN…AGRQYHLAMA (243 aa)). Catalysis depends on Ser-652, which acts as the Nucleophile. Lys-692 is a catalytic residue. Disordered regions lie at residues 837 to 857 (GYGV…KDTR) and 968 to 1012 (TAME…EDLE). The segment covering 975–986 (RNPRRAPPKPKP) has biased composition (basic residues). The tract at residues 1003 to 1012 (IRTVSDEDLE) is interaction with VP1 protein.

In terms of assembly, homotrimer. A central divalent metal stabilizes the VP2 trimer. Interacts with host ITGA4/ITGB1. Homodimer. Interacts (via C-terminus) with VP1 in the cytoplasm. Interacts with VP2. In terms of processing, specific enzymatic cleavages yield mature proteins. The capsid assembly seems to be regulated by polyprotein processing. The protease VP4 cleaves itself off the polyprotein, thus releasing pre-VP2 and VP3 within the infected cell. During capsid assembly, the C-terminus of pre-VP2 is further processed by VP4, giving rise to VP2, the external capsid protein and three small peptides that all stay closely associated with the capsid.

The protein resides in the virion. It is found in the host cytoplasm. Its function is as follows. Capsid protein VP2 self assembles to form an icosahedral capsid with a T=13 symmetry, about 70 nm in diameter, and consisting of 260 VP2 trimers. The capsid encapsulates the genomic dsRNA. VP2 is also involved in attachment and entry into the host cell by interacting with host ITGA4/ITGB1. The precursor of VP2 plays an important role in capsid assembly. First, pre-VP2 and VP2 oligomers assemble to form a procapsid. Then, the pre-VP2 intermediates may be processed into VP2 proteins by proteolytic cleavage mediated by VP4 to obtain the mature virion. The final capsid is composed of pentamers and hexamers but VP2 has a natural tendency to assemble into all-pentameric structures. Therefore pre-VP2 may be required to allow formation of the hexameric structures. In terms of biological role, protease VP4 is a serine protease that cleaves the polyprotein into its final products. Pre-VP2 is first partially cleaved, and may be completely processed by VP4 upon capsid maturation. Functionally, capsid protein VP3 plays a key role in virion assembly by providing a scaffold for the capsid made of VP2. May self-assemble to form a T=4-like icosahedral inner-capsid composed of at least 180 trimers. Plays a role in genomic RNA packaging by recruiting VP1 into the capsid and interacting with the dsRNA genome segments to form a ribonucleoprotein complex. Additionally, the interaction of the VP3 C-terminal tail with VP1 removes the inherent structural blockade of the polymerase active site. Thus, VP3 can also function as a transcriptional activator. Its function is as follows. Structural peptide 1 is a small peptide derived from pre-VP2 C-terminus. It destabilizes and perforates cell membranes, suggesting a role during entry. Structural peptide 2 is a small peptide derived from pVP2 C-terminus. It is not essential for the virus viability, but viral growth is affected when missing. In terms of biological role, structural peptide 3 is a small peptide derived from pVP2 C-terminus. It is not essential for the virus viability, but viral growth is affected when missing. Functionally, structural peptide 4 is a small peptide derived from pVP2 C-terminus. It is essential for the virus viability. The sequence is that of Structural polyprotein from Gallus gallus (Chicken).